Here is a 269-residue protein sequence, read N- to C-terminus: Regulating synaptic membrane exocytosis protein 4 (269 aa).

The C2 domain maps to 115-233 (PMGDVEIGLQ…DLTTLAVGWY (119 aa)). Residues Ser254 and Ser257 each carry the phosphoserine modification.

In terms of assembly, binds PPFIA3. Does not bind RAB3.

It is found in the synapse. Its function is as follows. Regulates synaptic membrane exocytosis. This chain is Regulating synaptic membrane exocytosis protein 4 (RIMS4), found in Homo sapiens (Human).